The chain runs to 64 residues: Small ribosomal subunit protein bS21 (64 aa).

Residues 37–64 are disordered; the sequence is EKPSVKRKRKEKEAQRRLRKKMRMMKKA. A compositionally biased stretch (basic residues) spans 53–64; the sequence is RLRKKMRMMKKA.

Belongs to the bacterial ribosomal protein bS21 family.

This is Small ribosomal subunit protein bS21 from Syntrophotalea carbinolica (strain DSM 2380 / NBRC 103641 / GraBd1) (Pelobacter carbinolicus).